Consider the following 138-residue polypeptide: UPF0310 protein MAV_1800 (138 aa).

The protein belongs to the UPF0310 family.

This chain is UPF0310 protein MAV_1800, found in Mycobacterium avium (strain 104).